Consider the following 99-residue polypeptide: Aspartyl/glutamyl-tRNA(Asn/Gln) amidotransferase subunit C (99 aa).

It belongs to the GatC family. Heterotrimer of A, B and C subunits.

The catalysed reaction is L-glutamyl-tRNA(Gln) + L-glutamine + ATP + H2O = L-glutaminyl-tRNA(Gln) + L-glutamate + ADP + phosphate + H(+). The enzyme catalyses L-aspartyl-tRNA(Asn) + L-glutamine + ATP + H2O = L-asparaginyl-tRNA(Asn) + L-glutamate + ADP + phosphate + 2 H(+). Its function is as follows. Allows the formation of correctly charged Asn-tRNA(Asn) or Gln-tRNA(Gln) through the transamidation of misacylated Asp-tRNA(Asn) or Glu-tRNA(Gln) in organisms which lack either or both of asparaginyl-tRNA or glutaminyl-tRNA synthetases. The reaction takes place in the presence of glutamine and ATP through an activated phospho-Asp-tRNA(Asn) or phospho-Glu-tRNA(Gln). This Polaromonas naphthalenivorans (strain CJ2) protein is Aspartyl/glutamyl-tRNA(Asn/Gln) amidotransferase subunit C.